The primary structure comprises 273 residues: UPF0380 protein YubP (273 aa).

The protein belongs to the UPF0380 family.

The polypeptide is UPF0380 protein YubP (yubP) (Escherichia coli (strain K12)).